A 258-amino-acid polypeptide reads, in one-letter code: Ribosomal RNA small subunit methyltransferase A (258 aa).

S-adenosyl-L-methionine is bound by residues asparagine 12, leucine 14, glycine 38, glutamate 59, aspartate 83, and asparagine 100.

The protein belongs to the class I-like SAM-binding methyltransferase superfamily. rRNA adenine N(6)-methyltransferase family. RsmA subfamily.

It is found in the cytoplasm. It carries out the reaction adenosine(1518)/adenosine(1519) in 16S rRNA + 4 S-adenosyl-L-methionine = N(6)-dimethyladenosine(1518)/N(6)-dimethyladenosine(1519) in 16S rRNA + 4 S-adenosyl-L-homocysteine + 4 H(+). In terms of biological role, specifically dimethylates two adjacent adenosines (A1518 and A1519) in the loop of a conserved hairpin near the 3'-end of 16S rRNA in the 30S particle. May play a critical role in biogenesis of 30S subunits. The protein is Ribosomal RNA small subunit methyltransferase A of Metamycoplasma arthritidis (strain 158L3-1) (Mycoplasma arthritidis).